A 750-amino-acid chain; its full sequence is Photosystem I P700 chlorophyll a apoprotein A1 (750 aa).

Helical transmembrane passes span 70-93 (VFSAHFGQLSIIFLWLSGMYFHGA), 156-179 (LYCTAIGALVFASLMLFAGWFHYH), 195-219 (LNHHLAGLLGLGSLSWAGHQIHVSL), 291-309 (IAHHHLAIAILFLIAGHMY), 346-369 (WHAQLSLNLAMLGSLTIVVAHHMY), 385-411 (LSLFTHHMWIGGFLIVGAAAHAAIFMV), 433-455 (AIISHLNWACIFLGFHSFGLYIH), and 531-549 (FLVHHIHAFTIHVTVLILL). Positions 573 and 582 each coordinate [4Fe-4S] cluster. The next 2 membrane-spanning stretches (helical) occupy residues 589–610 (HVFLGLFWMYNAISVVIFHFSW) and 664–686 (LSAYGLFFLGAHFVWAFSLMFLF). His-675 contacts chlorophyll a'. Residues Met-683 and Tyr-691 each coordinate chlorophyll a. Trp-692 contacts phylloquinone. Residues 724-744 (AVGVTHYLLGGIATTWAFFLA) form a helical membrane-spanning segment.

Belongs to the PsaA/PsaB family. In terms of assembly, the PsaA/B heterodimer binds the P700 chlorophyll special pair and subsequent electron acceptors. PSI consists of a core antenna complex that captures photons, and an electron transfer chain that converts photonic excitation into a charge separation. The eukaryotic PSI reaction center is composed of at least 11 subunits. P700 is a chlorophyll a/chlorophyll a' dimer, A0 is one or more chlorophyll a, A1 is one or both phylloquinones and FX is a shared 4Fe-4S iron-sulfur center. serves as cofactor.

The protein resides in the plastid. It localises to the chloroplast thylakoid membrane. It carries out the reaction reduced [plastocyanin] + hnu + oxidized [2Fe-2S]-[ferredoxin] = oxidized [plastocyanin] + reduced [2Fe-2S]-[ferredoxin]. Functionally, psaA and PsaB bind P700, the primary electron donor of photosystem I (PSI), as well as the electron acceptors A0, A1 and FX. PSI is a plastocyanin-ferredoxin oxidoreductase, converting photonic excitation into a charge separation, which transfers an electron from the donor P700 chlorophyll pair to the spectroscopically characterized acceptors A0, A1, FX, FA and FB in turn. Oxidized P700 is reduced on the lumenal side of the thylakoid membrane by plastocyanin. This chain is Photosystem I P700 chlorophyll a apoprotein A1, found in Phalaenopsis aphrodite subsp. formosana (Moth orchid).